Reading from the N-terminus, the 289-residue chain is Purine nucleoside phosphorylase (289 aa).

N-acetylmethionine is present on M1. Residues S33, H64, and 84-86 contribute to the phosphate site; that span reads RFH. Position 88 (Y88) interacts with a purine D-ribonucleoside. A116 lines the phosphate pocket. E201 and M219 together coordinate a purine D-ribonucleoside. A phosphate-binding site is contributed by S220. The a purine D-ribonucleoside site is built by N243 and H257.

It belongs to the PNP/MTAP phosphorylase family. In terms of assembly, homotrimer.

It localises to the cytoplasm. It catalyses the reaction inosine + phosphate = alpha-D-ribose 1-phosphate + hypoxanthine. The catalysed reaction is guanosine + phosphate = alpha-D-ribose 1-phosphate + guanine. It carries out the reaction 2'-deoxyguanosine + phosphate = 2-deoxy-alpha-D-ribose 1-phosphate + guanine. The enzyme catalyses 2'-deoxyinosine + phosphate = 2-deoxy-alpha-D-ribose 1-phosphate + hypoxanthine. The protein operates within purine metabolism; purine nucleoside salvage. Its function is as follows. Catalyzes the phosphorolytic breakdown of the N-glycosidic bond in the beta-(deoxy)ribonucleoside molecules, with the formation of the corresponding free purine bases and pentose-1-phosphate. Preferentially acts on 6-oxopurine nucleosides including inosine and guanosine. This is Purine nucleoside phosphorylase (Pnp) from Mus musculus (Mouse).